A 291-amino-acid polypeptide reads, in one-letter code: Urease accessory protein UreD (291 aa).

This sequence belongs to the UreD family. As to quaternary structure, ureD, UreF and UreG form a complex that acts as a GTP-hydrolysis-dependent molecular chaperone, activating the urease apoprotein by helping to assemble the nickel containing metallocenter of UreC. The UreE protein probably delivers the nickel.

Its subcellular location is the cytoplasm. In terms of biological role, required for maturation of urease via the functional incorporation of the urease nickel metallocenter. The polypeptide is Urease accessory protein UreD (Acinetobacter baumannii (strain SDF)).